The primary structure comprises 1632 residues: Guanine exchange factor for Rac 30 (1632 aa).

The region spanning 16 to 122 (NIQIDSFTSW…VIFLLIQKIK (107 aa)) is the Calponin-homology (CH) domain. 2 disordered regions span residues 134–155 (QGETTGTTTTITSTNTTTTPTK) and 171–285 (FSHI…PTTG). Low complexity-rich tracts occupy residues 137–154 (TTGTTTTITSTNTTTTPT) and 180–284 (QSSS…SPTT). 2 consecutive IQ domains span residues 388–417 (DLKKIIFMQSVIRGYLVRSKWRNVLEKYKQ) and 432–461 (AYRGLIRVQAIVKGKIQRKKLFKMFPLYRR). In terms of domain architecture, DH spans 460-638 (RRNEIVKEIL…KDVAEYVNEK (179 aa)). Positions 775–795 (QINNQNNNQNNNQNNNLNNNN) are enriched in low complexity. The segment at 775–798 (QINNQNNNQNNNQNNNLNNNNDDS) is disordered. A PH 1 domain is found at 940–1038 (DSEFSNVLEK…WISLIRLSIK (99 aa)). Low complexity predominate over residues 1138–1156 (STSASQSQSQSPSPSPSHS). The disordered stretch occupies residues 1138–1161 (STSASQSQSQSPSPSPSHSINQKQ). The region spanning 1271–1389 (NSCGDNINND…NNNNNNSQNG (119 aa)) is the Arf-GAP domain. Residues 1286–1309 (CAECGASDPSWVSINYGVVVCLDC) form a C4-type zinc finger. Composition is skewed to low complexity over residues 1380–1402 (NNNNNNSQNGDSTTPTPTPTSTT), 1409–1431 (STPTSPNLNSQSSPPPTATTTQT), and 1441–1481 (SSPT…TTPT). The disordered stretch occupies residues 1380 to 1521 (NNNNNNSQNG…SSHAITERKT (142 aa)). The segment covering 1500-1515 (DTSNGKGTWSRGSSHA) has biased composition (polar residues). The region spanning 1532-1631 (KKEHQGYLFK…WLDVLSSHTT (100 aa)) is the PH 2 domain.

Its subcellular location is the membrane. It is found in the cytoplasmic vesicle. The protein localises to the phagosome membrane. GTPase-activating protein for Rac involved in streaming and development. This Dictyostelium discoideum (Social amoeba) protein is Guanine exchange factor for Rac 30 (gxcDD).